We begin with the raw amino-acid sequence, 275 residues long: Transmembrane protein 45A (275 aa).

5 consecutive transmembrane segments (helical) span residues 7–27 (HALPGTFFFIIGLWWCTKSIL), 51–71 (ILEGITIVGMALTGMAGEQFI), 100–120 (FFFGLLGVADILCFTISSLPV), 150–170 (IFVHQLLVLVVFLTGLVAFLE), and 218–238 (ILFLTICFCWHYAVTIVIVGM).

The protein belongs to the TMEM45 family.

It localises to the membrane. The chain is Transmembrane protein 45A (TMEM45A) from Homo sapiens (Human).